The primary structure comprises 902 residues: Calcium-activated chloride channel regulator 3A-1 (902 aa).

Residues 1-21 (MVPGLQVLLFLTLHLLQNTES) form the signal peptide. A metalloprotease domain region spans residues 45-199 (DERLIPSIKE…RITGTNVVHN (155 aa)). N-linked (GlcNAc...) asparagine glycosylation occurs at Asn-75. Zn(2+) is bound at residue His-155. Glu-156 is a catalytic residue. Zn(2+)-binding residues include His-159 and Asp-166. The region spanning 308–476 (VVCLVLDKSG…NSLIDAFSRI (169 aa)) is the VWFA domain. N-linked (GlcNAc...) asparagine glycosylation is found at Asn-504, Asn-515, Asn-630, Asn-687, Asn-697, Asn-809, and Asn-814.

It belongs to the CLCR family. In terms of assembly, part of a complex composed of complement component C3, CLCA1/CLCA3, A2ML1/OH and ALB/serum albumin. Glycosylated. In terms of processing, the 130-kDa product is autoproteolytically processed by the metalloprotease domain and yields two subunits, a 90-kDa protein and a group of 32- to 38-kDa proteins. The cleavage is necessary for calcium-activated chloride channel (CaCC) activation activity. As to expression, highly expressed in skin and spleen, and at lower levels in kidney and liver. Also detected in lung and brain. Not detected in lung or brain. In lung, localizes to respiratory epithelia of the bronchi and trachea and the submucosal glands.

It is found in the cell membrane. Its function is as follows. Plays a role in modulating chloride current across the plasma membrane in a calcium-dependent manner. The chain is Calcium-activated chloride channel regulator 3A-1 from Mus musculus (Mouse).